The primary structure comprises 54 residues: MEFLNANFGASLIQSKHKTTKKHNLVNSCCCSKPAEKPTNSCTCSKCACDSCKC.

Belongs to the metallothionein superfamily. Type 11 family.

This Yarrowia lipolytica (strain CLIB 122 / E 150) (Yeast) protein is Metallothionein-4 (MTP4).